Here is a 99-residue protein sequence, read N- to C-terminus: Sm-like protein LSM7 (99 aa).

Residues 6-86 (ETVLDLAKFV…VMLVSPTDGT (81 aa)) enclose the Sm domain.

The protein belongs to the snRNP Sm proteins family. Component of the heptameric LSM1-LSM7 complex that forms a seven-membered ring structure with a donut shape. The LSM subunits are arranged in the order LSM1, LSM2, LSM3, LSM6, LSM5, LSM7 and LSM4. Component of the heptameric LSM2-LSM8 complex that forms a seven-membered ring structure with a donut shape. The LSM subunits are arranged in the order LSM8, LSM2, LSM3, LSM6, LSM5, LSM7 and LSM4. LSM7 subunit interacts only with its two neighboring subunits, LSM5 and LSM4. As to expression, expressed in roots, leaves, stems, flowers and siliques.

The protein localises to the cytoplasm. Its subcellular location is the nucleus. Functionally, component of LSM protein complexes, which are involved in RNA processing. Component of the cytoplasmic LSM1-LSM7 complex which is involved in mRNA degradation by promoting decapping and leading to accurate 5'-3' mRNA decay. The cytoplasmic LSM1-LSM7 complex regulates developmental gene expression by the decapping of specific development-related transcripts. Component of the nuclear LSM2-LSM8 complex which is involved splicing nuclear mRNAs. LSM2-LSM8 binds directly to the U6 small nuclear RNAs (snRNAs) and is essential for accurate splicing of selected development-related mRNAs through the stabilization of the spliceosomal U6 snRNA. Plays a critical role in the regulation of development-related gene expression. This is Sm-like protein LSM7 from Arabidopsis thaliana (Mouse-ear cress).